A 339-amino-acid polypeptide reads, in one-letter code: Anthranilate phosphoribosyltransferase (339 aa).

5-phospho-alpha-D-ribose 1-diphosphate is bound by residues glycine 79, 82 to 83 (GD), serine 87, 89 to 92 (NIST), 107 to 115 (KHGNRSISS), and serine 119. Anthranilate is bound at residue glycine 79. Mg(2+) is bound at residue serine 91. Asparagine 110 provides a ligand contact to anthranilate. Residue arginine 165 coordinates anthranilate. Aspartate 224 and glutamate 225 together coordinate Mg(2+).

It belongs to the anthranilate phosphoribosyltransferase family. Homodimer. The cofactor is Mg(2+).

The catalysed reaction is N-(5-phospho-beta-D-ribosyl)anthranilate + diphosphate = 5-phospho-alpha-D-ribose 1-diphosphate + anthranilate. It functions in the pathway amino-acid biosynthesis; L-tryptophan biosynthesis; L-tryptophan from chorismate: step 2/5. Catalyzes the transfer of the phosphoribosyl group of 5-phosphorylribose-1-pyrophosphate (PRPP) to anthranilate to yield N-(5'-phosphoribosyl)-anthranilate (PRA). The polypeptide is Anthranilate phosphoribosyltransferase (Listeria monocytogenes serotype 4b (strain CLIP80459)).